A 289-amino-acid chain; its full sequence is UDP-3-O-acyl-N-acetylglucosamine deacetylase (289 aa).

Zn(2+)-binding residues include His79, His236, and Asp240. His263 (proton donor) is an active-site residue.

Belongs to the LpxC family. Zn(2+) is required as a cofactor.

The catalysed reaction is a UDP-3-O-[(3R)-3-hydroxyacyl]-N-acetyl-alpha-D-glucosamine + H2O = a UDP-3-O-[(3R)-3-hydroxyacyl]-alpha-D-glucosamine + acetate. The protein operates within glycolipid biosynthesis; lipid IV(A) biosynthesis; lipid IV(A) from (3R)-3-hydroxytetradecanoyl-[acyl-carrier-protein] and UDP-N-acetyl-alpha-D-glucosamine: step 2/6. Catalyzes the hydrolysis of UDP-3-O-myristoyl-N-acetylglucosamine to form UDP-3-O-myristoylglucosamine and acetate, the committed step in lipid A biosynthesis. The sequence is that of UDP-3-O-acyl-N-acetylglucosamine deacetylase from Rickettsia typhi (strain ATCC VR-144 / Wilmington).